The chain runs to 197 residues: Guanylate kinase (197 aa).

Residues 1 to 30 (MAATPRGTSPVPPDARPRLTVLSGPSGVGK) form a disordered region. The Guanylate kinase-like domain maps to 17 to 197 (PRLTVLSGPS…RELLALTNVV (181 aa)). 24–31 (GPSGVGKS) is a binding site for ATP.

It belongs to the guanylate kinase family.

The protein localises to the cytoplasm. The enzyme catalyses GMP + ATP = GDP + ADP. Its function is as follows. Essential for recycling GMP and indirectly, cGMP. The chain is Guanylate kinase (gmk) from Streptomyces coelicolor (strain ATCC BAA-471 / A3(2) / M145).